A 221-amino-acid chain; its full sequence is UPF0502 protein CPS_0106 (221 aa).

It belongs to the UPF0502 family.

The polypeptide is UPF0502 protein CPS_0106 (Colwellia psychrerythraea (strain 34H / ATCC BAA-681) (Vibrio psychroerythus)).